A 333-amino-acid polypeptide reads, in one-letter code: Ketol-acid reductoisomerase (NADP(+)) (333 aa).

The region spanning 1 to 171 (MSNDTQPTIA…GGARANIIKT (171 aa)) is the KARI N-terminal Rossmann domain. NADP(+) is bound by residues 14 to 17 (YGSQ), R37, T42, and 72 to 75 (DMVQ). The active site involves H97. G123 is an NADP(+) binding site. A KARI C-terminal knotted domain is found at 172 to 317 (TFKEETETDL…KKLRAKMVWL (146 aa)). Mg(2+) is bound by residues D180, E184, E216, and E220. S241 is a substrate binding site.

The protein belongs to the ketol-acid reductoisomerase family. Mg(2+) is required as a cofactor.

It catalyses the reaction (2R)-2,3-dihydroxy-3-methylbutanoate + NADP(+) = (2S)-2-acetolactate + NADPH + H(+). It carries out the reaction (2R,3R)-2,3-dihydroxy-3-methylpentanoate + NADP(+) = (S)-2-ethyl-2-hydroxy-3-oxobutanoate + NADPH + H(+). It participates in amino-acid biosynthesis; L-isoleucine biosynthesis; L-isoleucine from 2-oxobutanoate: step 2/4. Its pathway is amino-acid biosynthesis; L-valine biosynthesis; L-valine from pyruvate: step 2/4. Its function is as follows. Involved in the biosynthesis of branched-chain amino acids (BCAA). Catalyzes an alkyl-migration followed by a ketol-acid reduction of (S)-2-acetolactate (S2AL) to yield (R)-2,3-dihydroxy-isovalerate. In the isomerase reaction, S2AL is rearranged via a Mg-dependent methyl migration to produce 3-hydroxy-3-methyl-2-ketobutyrate (HMKB). In the reductase reaction, this 2-ketoacid undergoes a metal-dependent reduction by NADPH to yield (R)-2,3-dihydroxy-isovalerate. The protein is Ketol-acid reductoisomerase (NADP(+)) of Xanthomonas campestris pv. campestris (strain 8004).